Here is a 420-residue protein sequence, read N- to C-terminus: Gamma-glutamyl phosphate reductase (420 aa).

It belongs to the gamma-glutamyl phosphate reductase family.

The protein localises to the cytoplasm. The enzyme catalyses L-glutamate 5-semialdehyde + phosphate + NADP(+) = L-glutamyl 5-phosphate + NADPH + H(+). The protein operates within amino-acid biosynthesis; L-proline biosynthesis; L-glutamate 5-semialdehyde from L-glutamate: step 2/2. Functionally, catalyzes the NADPH-dependent reduction of L-glutamate 5-phosphate into L-glutamate 5-semialdehyde and phosphate. The product spontaneously undergoes cyclization to form 1-pyrroline-5-carboxylate. In Streptococcus pneumoniae (strain 70585), this protein is Gamma-glutamyl phosphate reductase.